Here is a 238-residue protein sequence, read N- to C-terminus: Ribitol-5-phosphate cytidylyltransferase 2 (238 aa).

CTP-binding positions include 7–10 (LAGG) and 81–87 (GTDRNET).

The protein belongs to the IspD/TarI cytidylyltransferase family. TarI subfamily. In terms of assembly, heterodimer together with TarJ.

The catalysed reaction is D-ribitol 5-phosphate + CTP + H(+) = CDP-L-ribitol + diphosphate. It participates in cell wall biogenesis; poly(ribitol phosphate) teichoic acid biosynthesis. In terms of biological role, catalyzes the transfer of the cytidylyl group of CTP to D-ribitol 5-phosphate. This chain is Ribitol-5-phosphate cytidylyltransferase 2, found in Staphylococcus aureus (strain NCTC 8325 / PS 47).